Reading from the N-terminus, the 145-residue chain is Protein BUD31 homolog 2 (145 aa).

The protein belongs to the BUD31 (G10) family.

Its subcellular location is the nucleus. The sequence is that of Protein BUD31 homolog 2 from Oryza sativa subsp. japonica (Rice).